A 396-amino-acid chain; its full sequence is Phosphoglycerate kinase (396 aa).

Substrate-binding positions include 21–23 (DIN), Arg36, 59–62 (HFGR), Arg114, and Arg147. ATP contacts are provided by residues Lys197, Glu319, and 349–352 (GGDT).

Belongs to the phosphoglycerate kinase family. In terms of assembly, monomer.

The protein localises to the cytoplasm. The catalysed reaction is (2R)-3-phosphoglycerate + ATP = (2R)-3-phospho-glyceroyl phosphate + ADP. Its pathway is carbohydrate degradation; glycolysis; pyruvate from D-glyceraldehyde 3-phosphate: step 2/5. This Jannaschia sp. (strain CCS1) protein is Phosphoglycerate kinase.